A 193-amino-acid chain; its full sequence is 7-methyl-GTP pyrophosphatase (193 aa).

The active-site Proton acceptor is Asp69.

The protein belongs to the Maf family. YceF subfamily. The cofactor is a divalent metal cation.

It is found in the cytoplasm. It catalyses the reaction N(7)-methyl-GTP + H2O = N(7)-methyl-GMP + diphosphate + H(+). Nucleoside triphosphate pyrophosphatase that hydrolyzes 7-methyl-GTP (m(7)GTP). May have a dual role in cell division arrest and in preventing the incorporation of modified nucleotides into cellular nucleic acids. The protein is 7-methyl-GTP pyrophosphatase of Chromohalobacter salexigens (strain ATCC BAA-138 / DSM 3043 / CIP 106854 / NCIMB 13768 / 1H11).